A 486-amino-acid chain; its full sequence is MKNGVKQISFLSLIGLSLIGLSLTNIAWAKVARPKNDTLTNTIQSAELKTSSFSSMPKKEIPNRHIISLSKSQLAQHPRLVLRGLILALYQNNTQAVQLLLPLYKQFPQHDNFLLTWAKAIDAREQGDLTQSIAYYRELFALDASLLPLRYQLAQALFFNYENESAKIQFEKLRTEVDDEKFLGVIDQYLLTLNQRNQWIWQVGLNFLNDDNLNNAPKSGTKIGSWTAWEKESGKGGRVFFISRKKWPWADHFFSKTMFNGNGKYYWDNKKYNEATLRIGGGLGYQTALVEVSLFPFQEKRWYAGGSSGTNTMKQYADKLGIRLENVDWLSKTWQISTALEYGESRYKIRKHLDGNYYFISSTLFYLPKSTQFWFVGMDFHRENTQALDNAYQQKTLRLGWGQDWSYGISSRLTFSYANRVYREKDLIGIQQKNREYATTITLWHRNIHFMGLTPKLSWDYQKSTSNHAFYRYDKNRIYLEIGKIF.

An N-terminal signal peptide occupies residues 1–29 (MKNGVKQISFLSLIGLSLIGLSLTNIAWA). An N-terminal domain region spans residues 30 to 197 (KVARPKNDTL…QYLLTLNQRN (168 aa)). The segment at 198–486 (QWIWQVGLNF…RIYLEIGKIF (289 aa)) is C-terminal probable beta barrel. Transmembrane regions (beta stranded) follow at residues 199–209 (WIWQVGLNFLN), 237–248 (GRVFFISRKKWP), 253–262 (FFSKTMFNGN), 276–286 (TLRIGGGLGYQ), 290–300 (VEVSLFPFQEK), 320–330 (LGIRLENVDWL), 334–344 (WQISTALEYGE), 358–367 (YFISSTLFYL), 373–382 (FWFVGMDFHR), 395–404 (KTLRLGWGQD), 409–419 (ISSRLTFSYAN), 437–446 (YATTITLWHR), 453–463 (LTPKLSWDYQK), and 476–486 (NRIYLEIGKIF).

The protein belongs to the Slam family.

Its subcellular location is the cell outer membrane. In terms of biological role, required for correct export to the cell surface of some cell outer membrane lipoproteins (tested with TpbP) upon heterologous expression in E.coli and probably also in Haemophilus. This Haemophilus influenzae (strain 86-028NP) protein is Surface lipoprotein assembly modifier.